Reading from the N-terminus, the 213-residue chain is Motile sperm domain-containing protein 1 (213 aa).

One can recognise an MSP domain in the interval 16–143 (PVFVFPTELI…KEHLTESVFF (128 aa)). 2 consecutive transmembrane segments (helical) span residues 159-179 (SLLT…PTLG) and 191-211 (LSVN…MAIL). The Nuclear export signal signature appears at 205-208 (LITM).

The protein resides in the endoplasmic reticulum membrane. Its subcellular location is the golgi apparatus membrane. Its function is as follows. Plays a role in differentiation and/or proliferation of mesenchymal stem cells. Proposed to be involved in epithelial-to-mesenchymal transition (EMT). However, another study suggests that it is not required for EMT or stem cell self-renewal and acts during later stages of differentiation. The chain is Motile sperm domain-containing protein 1 (Mospd1) from Rattus norvegicus (Rat).